A 306-amino-acid chain; its full sequence is Serrate RNA effector molecule homolog (306 aa).

Residues 1–28 form a disordered region; that stretch reads HKEEELLGSSGGPPPEEPPKEGNPAEIN. A Phosphothreonine modification is found at Thr101. Ser109 is modified (phosphoserine). Positions 251–284 are disordered; the sequence is GPPYPHGPYGAGRGNYDAFRGQGGYPGKPRNRMV. An omega-N-methylarginine mark is found at Arg263, Arg270, and Arg280.

It belongs to the ARS2 family. As to quaternary structure, interacts with CASP8AP2, ERBB4, NCBP1/CBP80 and DROSHA. Interacts with LUZP4. Interacts with NCBP2/CBP20 and NCBP3.

The protein localises to the nucleus. Its subcellular location is the nucleoplasm. The protein resides in the cytoplasm. Its function is as follows. Acts as a mediator between the cap-binding complex (CBC) and the primary microRNAs (miRNAs) processing machinery during cell proliferation. Contributes to the stability and delivery of capped primary miRNA transcripts to the primary miRNA processing complex containing DGCR8 and DROSHA, thereby playing a role in RNA-mediated gene silencing (RNAi) by miRNAs. Binds capped RNAs (m7GpppG-capped RNA); however interaction is probably mediated via its interaction with NCBP1/CBP80 component of the CBC complex. Involved in cell cycle progression at S phase. Does not directly confer arsenite resistance but rather modulates arsenic sensitivity. Independently of its activity on miRNAs, necessary and sufficient to promote neural stem cell self-renewal. Does so by directly binding SOX2 promoter and positively regulating its transcription. This Cricetulus griseus (Chinese hamster) protein is Serrate RNA effector molecule homolog (SRRT).